The primary structure comprises 365 residues: Membrane cofactor protein (365 aa).

A signal peptide spans 1–44; that stretch reads MTAAPLMPDSTHPCRRRKSYTFFWCSLGVYAEALLFLLSHLSDA. 4 Sushi domains span residues 45–106, 107–170, 171–236, and 237–296; these read CELP…GCIK, VQCT…HCEK, IYCL…ECKV, and VKCP…KCLK. At 45-329 the chain is on the extracellular side; it reads CELPRPFEAM…GIFSQELDAW (285 aa). 6 cysteine pairs are disulfide-bonded: cysteine 109-cysteine 151, cysteine 137-cysteine 168, cysteine 173-cysteine 221, cysteine 202-cysteine 234, cysteine 239-cysteine 281, and cysteine 267-cysteine 294. Asparagine 181 carries an N-linked (GlcNAc...) asparagine glycan. A glycan (O-linked (GalNAc...) threonine) is linked at threonine 205. Residues threonine 301 and threonine 304 are each glycosylated (O-linked (GalNAc...) threonine). Asparagine 310 is a glycosylation site (N-linked (GlcNAc...) asparagine). Threonine 312 is a glycosylation site (O-linked (GalNAc...) threonine). Residues 330–350 form a helical membrane-spanning segment; the sequence is IIALIVITSIVGVFILCLIVL. The Cytoplasmic segment spans residues 351–365; it reads RCFEHRKKTNVSAAR.

In terms of assembly, interacts with C3b. Interacts with C4b. Interacts with moesin/MSN. In terms of processing, may be O-glycosylated. N-glycosylated. As to expression, present only in testis (at protein level).

The protein resides in the cytoplasmic vesicle. The protein localises to the secretory vesicle. Its subcellular location is the acrosome inner membrane. It is found in the secreted. May be involved in the fusion of the spermatozoa with the oocyte during fertilization. The polypeptide is Membrane cofactor protein (Cd46) (Mus musculus (Mouse)).